We begin with the raw amino-acid sequence, 181 residues long: Extracellular superoxide dismutase [Cu-Zn] (181 aa).

The first 18 residues, 1–18 (MMQYLVVSLALCATICSA), serve as a signal peptide directing secretion. The N-linked (GlcNAc...) asparagine glycan is linked to Asn-46. Residues His-75, His-77, and His-92 each coordinate Cu cation. An intrachain disulfide couples Cys-86 to Cys-175. Residues His-92, His-100, His-109, and Asp-112 each coordinate Zn(2+). Asn-119 carries N-linked (GlcNAc...) asparagine glycosylation. Residue His-149 coordinates Cu cation. Asn-159 carries N-linked (GlcNAc...) asparagine glycosylation.

This sequence belongs to the Cu-Zn superoxide dismutase family. The cofactor is Cu cation. Zn(2+) serves as cofactor. In terms of tissue distribution, expressed at higher levels in females compared to males.

It is found in the secreted. The enzyme catalyses 2 superoxide + 2 H(+) = H2O2 + O2. Protects the extracellular space from the toxic effects of reactive oxygen intermediates by converting superoxide radicals into hydrogen peroxide and oxygen. The chain is Extracellular superoxide dismutase [Cu-Zn] from Drosophila melanogaster (Fruit fly).